The primary structure comprises 568 residues: 2-isopropylmalate synthase (568 aa).

The 277-residue stretch at 37 to 313 folds into the Pyruvate carboxyltransferase domain; that stretch reads PRWLSTDLRD…DPMIDFSNID (277 aa). Residues Asp-46, His-252, His-254, and Asn-288 each contribute to the Mg(2+) site. A regulatory domain region spans residues 455-568; sequence EGVVGVMAYR…CSAVNRAQQS (114 aa).

This sequence belongs to the alpha-IPM synthase/homocitrate synthase family. LeuA type 2 subfamily. Homodimer. Requires Mg(2+) as cofactor.

The protein resides in the cytoplasm. The enzyme catalyses 3-methyl-2-oxobutanoate + acetyl-CoA + H2O = (2S)-2-isopropylmalate + CoA + H(+). Its pathway is amino-acid biosynthesis; L-leucine biosynthesis; L-leucine from 3-methyl-2-oxobutanoate: step 1/4. In terms of biological role, catalyzes the condensation of the acetyl group of acetyl-CoA with 3-methyl-2-oxobutanoate (2-ketoisovalerate) to form 3-carboxy-3-hydroxy-4-methylpentanoate (2-isopropylmalate). In Thermobifida fusca (strain YX), this protein is 2-isopropylmalate synthase.